We begin with the raw amino-acid sequence, 159 residues long: Ribosome maturation factor RimP (159 aa).

The protein belongs to the RimP family.

The protein resides in the cytoplasm. Its function is as follows. Required for maturation of 30S ribosomal subunits. This Geotalea daltonii (strain DSM 22248 / JCM 15807 / FRC-32) (Geobacter daltonii) protein is Ribosome maturation factor RimP.